The chain runs to 252 residues: ATP-dependent L-serine kinase (252 aa).

Residue Glu35 is part of the active site. O-phospho-L-serine is bound at residue Val73. Residue Asp74 coordinates Mg(2+). O-phospho-L-serine-binding residues include Gly75, His76, His77, Trp107, Lys231, Thr233, and His235.

Belongs to the SerK family. Monomer. The cofactor is Mg(2+).

It carries out the reaction L-serine + ATP = O-phospho-L-serine + ADP + H(+). Its function is as follows. Free serine kinase that uses ATP to phosphorylate L-serine to yield O-phospho-L-serine and ADP. Can use ATP, UTP, CTP, GTP and the inorganic polyphosphates triphosphate and tetraphosphate as phosphate donors, with a preference for nucleoside 5'-triphosphates, but cannot use ADP. The catalytic efficiency is highest for ATP. Is specific for L-serine and cannot phosphorylate structurally similar compounds such as D-serine, L-threonine, L-homoserine, hydroxypyruvate, 3-hydroxypropionate and DL-glycerate. Likely contributes to serine metabolism, including cysteine biosynthesis. This is ATP-dependent L-serine kinase from Staphylothermus marinus (strain ATCC 43588 / DSM 3639 / JCM 9404 / F1).